The chain runs to 332 residues: Ketol-acid reductoisomerase (NADP(+)) (332 aa).

The 182-residue stretch at Met1–Thr182 folds into the KARI N-terminal Rossmann domain. NADP(+) contacts are provided by residues Tyr25–Gln28 and Asp83–Gln86. The active site involves His108. Gly134 contacts NADP(+). Residues Thr183–Leu328 enclose the KARI C-terminal knotted domain. Positions 191, 195, 227, and 231 each coordinate Mg(2+). Ser252 provides a ligand contact to substrate.

Belongs to the ketol-acid reductoisomerase family. Mg(2+) is required as a cofactor.

It catalyses the reaction (2R)-2,3-dihydroxy-3-methylbutanoate + NADP(+) = (2S)-2-acetolactate + NADPH + H(+). The enzyme catalyses (2R,3R)-2,3-dihydroxy-3-methylpentanoate + NADP(+) = (S)-2-ethyl-2-hydroxy-3-oxobutanoate + NADPH + H(+). It functions in the pathway amino-acid biosynthesis; L-isoleucine biosynthesis; L-isoleucine from 2-oxobutanoate: step 2/4. It participates in amino-acid biosynthesis; L-valine biosynthesis; L-valine from pyruvate: step 2/4. Functionally, involved in the biosynthesis of branched-chain amino acids (BCAA). Catalyzes an alkyl-migration followed by a ketol-acid reduction of (S)-2-acetolactate (S2AL) to yield (R)-2,3-dihydroxy-isovalerate. In the isomerase reaction, S2AL is rearranged via a Mg-dependent methyl migration to produce 3-hydroxy-3-methyl-2-ketobutyrate (HMKB). In the reductase reaction, this 2-ketoacid undergoes a metal-dependent reduction by NADPH to yield (R)-2,3-dihydroxy-isovalerate. In Dehalococcoides mccartyi (strain ATCC BAA-2100 / JCM 16839 / KCTC 5957 / BAV1), this protein is Ketol-acid reductoisomerase (NADP(+)).